The chain runs to 191 residues: MIESTIISQLEEASAVLSNFIEQEKKQNSIAKAADVITSSLKQGGKIISCGNGGSSCDAMHFAEELTGRYRENRKAIPAISISDPSHMSCVANDYGYKFVFSRYLEALGNKGDVLLAISTSGNSENVLEAVKEAKNKGMFVVALTGKDGGKLLPLADVCINVPHVGYADRIQEVHIKIIHTLILLIEQSLL.

In terms of domain architecture, SIS spans 37–191 (ITSSLKQGGK…LILLIEQSLL (155 aa)). Residue 52–54 (NGG) coordinates substrate. 2 residues coordinate Zn(2+): histidine 61 and glutamate 65. Substrate contacts are provided by residues glutamate 65, 93-94 (ND), 119-121 (STS), serine 124, and glutamine 172. Glutamine 172 and histidine 180 together coordinate Zn(2+).

It belongs to the SIS family. GmhA subfamily. Zn(2+) is required as a cofactor.

It is found in the cytoplasm. The enzyme catalyses 2 D-sedoheptulose 7-phosphate = D-glycero-alpha-D-manno-heptose 7-phosphate + D-glycero-beta-D-manno-heptose 7-phosphate. The protein operates within carbohydrate biosynthesis; D-glycero-D-manno-heptose 7-phosphate biosynthesis; D-glycero-alpha-D-manno-heptose 7-phosphate and D-glycero-beta-D-manno-heptose 7-phosphate from sedoheptulose 7-phosphate: step 1/1. Functionally, catalyzes the isomerization of sedoheptulose 7-phosphate in D-glycero-D-manno-heptose 7-phosphate. This chain is Phosphoheptose isomerase, found in Cytophaga hutchinsonii (strain ATCC 33406 / DSM 1761 / CIP 103989 / NBRC 15051 / NCIMB 9469 / D465).